A 292-amino-acid chain; its full sequence is Cytidine deaminase (292 aa).

2 CMP/dCMP-type deaminase domains span residues 47–167 and 186–292; these read TPLK…FGPK and DHQD…YYSL. A substrate-binding site is contributed by 88–90; it reads NQE. His101 contributes to the Zn(2+) binding site. Catalysis depends on Glu103, which acts as the Proton donor. Zn(2+) is bound by residues Cys128 and Cys131.

Belongs to the cytidine and deoxycytidylate deaminase family. Homodimer. The cofactor is Zn(2+).

It catalyses the reaction cytidine + H2O + H(+) = uridine + NH4(+). The catalysed reaction is 2'-deoxycytidine + H2O + H(+) = 2'-deoxyuridine + NH4(+). In terms of biological role, this enzyme scavenges exogenous and endogenous cytidine and 2'-deoxycytidine for UMP synthesis. The sequence is that of Cytidine deaminase from Haemophilus influenzae (strain 86-028NP).